A 198-amino-acid polypeptide reads, in one-letter code: Na(+)-translocating NADH-quinone reductase subunit E (198 aa).

The next 6 membrane-spanning stretches (helical) occupy residues 11 to 31, 39 to 59, 77 to 97, 110 to 130, 140 to 160, and 176 to 196; these read SIFIENMALSFFLGMCTFLAV, FGLGVAVVVVLTIAVPVNNLV, FLNFITFIGVIAALVQILEMV, GIFLPLITVNCAIFGGVSFMV, IVYGFGSGVGWMLAIVALAGI, and LGITFITVGLMALGFMSFSGV.

The protein belongs to the NqrDE/RnfAE family. As to quaternary structure, composed of six subunits; NqrA, NqrB, NqrC, NqrD, NqrE and NqrF. The N-terminus is blocked.

It localises to the cell inner membrane. The enzyme catalyses a ubiquinone + n Na(+)(in) + NADH + H(+) = a ubiquinol + n Na(+)(out) + NAD(+). With respect to regulation, this reaction is tightly coupled to the Na(+) pumping activity and specifically requires Na(+) for activity. Inhibited by korormicin and 2-N-heptyl-4-hydroxyquinoline N-oxide (HQNO). Its function is as follows. NQR complex catalyzes the reduction of ubiquinone-1 to ubiquinol by two successive reactions, coupled with the transport of Na(+) ions from the cytoplasm to the periplasm. NqrA to NqrE are probably involved in the second step, the conversion of ubisemiquinone to ubiquinol. This chain is Na(+)-translocating NADH-quinone reductase subunit E, found in Vibrio alginolyticus.